Consider the following 149-residue polypeptide: Calmodulin (149 aa).

Alanine 2 carries the N-acetylalanine modification. EF-hand domains are found at residues glutamate 8–asparagine 43, proline 44–aspartate 79, aspartate 81–lysine 116, and leucine 117–lysine 149. Residues aspartate 21, aspartate 23, aspartate 25, threonine 27, glutamate 32, aspartate 57, aspartate 59, asparagine 61, threonine 63, glutamate 68, aspartate 94, aspartate 96, asparagine 98, and glutamate 105 each contribute to the Ca(2+) site. The residue at position 116 (lysine 116) is an N6,N6,N6-trimethyllysine. Residues aspartate 130, aspartate 132, aspartate 134, glutamine 136, and glutamate 141 each coordinate Ca(2+).

This sequence belongs to the calmodulin family. Interacts (in the presence of Ca(2+)) with pde-1, madf-3, rpl-7A, tax-6, efk-1, npp-1, obr-4, sos-1, akt-1, unc-13, tag-196, ugt-48, nmy-2, F27D4.4, ddx-23, efa-6 and R11H6.4.

Its function is as follows. Calmodulin mediates the control of a large number of enzymes, ion channels and other proteins by Ca(2+). Among the enzymes to be stimulated by the calmodulin-Ca(2+) complex are a number of protein kinases and phosphatases. This Caenorhabditis elegans protein is Calmodulin (cmd-1).